The chain runs to 137 residues: Large ribosomal subunit protein uL16 (137 aa).

The protein belongs to the universal ribosomal protein uL16 family. In terms of assembly, part of the 50S ribosomal subunit.

In terms of biological role, binds 23S rRNA and is also seen to make contacts with the A and possibly P site tRNAs. The polypeptide is Large ribosomal subunit protein uL16 (Stutzerimonas stutzeri (strain A1501) (Pseudomonas stutzeri)).